Reading from the N-terminus, the 438-residue chain is 2-(3-amino-3-carboxypropyl)histidine synthase subunit 1 (438 aa).

Residues cysteine 110, cysteine 214, and cysteine 342 each coordinate [4Fe-4S] cluster. At serine 418 the chain carries Phosphoserine.

The protein belongs to the DPH1/DPH2 family. DPH1 subfamily. Component of the 2-(3-amino-3-carboxypropyl)histidine synthase complex composed of DPH1, DPH2, DPH3 and a NADH-dependent reductase. Interacts with DPH2 and RBM8A. The cofactor is [4Fe-4S] cluster.

Its subcellular location is the nucleus. It is found in the cytoplasm. The catalysed reaction is L-histidyl-[translation elongation factor 2] + S-adenosyl-L-methionine = 2-[(3S)-amino-3-carboxypropyl]-L-histidyl-[translation elongation factor 2] + S-methyl-5'-thioadenosine + H(+). It participates in protein modification; peptidyl-diphthamide biosynthesis. Its function is as follows. Catalyzes the first step of diphthamide biosynthesis, a post-translational modification of histidine which occurs in elongation factor 2. DPH1 and DPH2 transfer a 3-amino-3-carboxypropyl (ACP) group from S-adenosyl-L-methionine (SAM) to a histidine residue, the reaction is assisted by a reduction system comprising DPH3 and a NADH-dependent reductase. In Bos taurus (Bovine), this protein is 2-(3-amino-3-carboxypropyl)histidine synthase subunit 1 (DPH1).